Consider the following 353-residue polypeptide: Photosystem II D2 protein (353 aa).

N-acetylthreonine is present on Thr-2. At Thr-2 the chain carries Phosphothreonine. The helical transmembrane segment at 41–61 (CAYFALGGWFTGTTFVTSWYT) threads the bilayer. Position 118 (His-118) interacts with chlorophyll a. Residues 125–141 (GFMLRQFELARSVQLRP) traverse the membrane as a helical segment. Residues Gln-130 and Asn-143 each coordinate pheophytin a. The chain crosses the membrane as a helical span at residues 153 to 166 (VFVSVFLIYPLGQS). His-198 contacts chlorophyll a. A helical transmembrane segment spans residues 208-228 (AALLCAIHGATVENTLFEDGD). A plastoquinone contacts are provided by His-215 and Phe-262. Residue His-215 participates in Fe cation binding. A Fe cation-binding site is contributed by His-269. A helical membrane pass occupies residues 279 to 295 (GLWMSALGVVGLALNLR).

It belongs to the reaction center PufL/M/PsbA/D family. In terms of assembly, PSII is composed of 1 copy each of membrane proteins PsbA, PsbB, PsbC, PsbD, PsbE, PsbF, PsbH, PsbI, PsbJ, PsbK, PsbL, PsbM, PsbT, PsbX, PsbY, PsbZ, Psb30/Ycf12, at least 3 peripheral proteins of the oxygen-evolving complex and a large number of cofactors. It forms dimeric complexes. Requires The D1/D2 heterodimer binds P680, chlorophylls that are the primary electron donor of PSII, and subsequent electron acceptors. It shares a non-heme iron and each subunit binds pheophytin, quinone, additional chlorophylls, carotenoids and lipids. There is also a Cl(-1) ion associated with D1 and D2, which is required for oxygen evolution. The PSII complex binds additional chlorophylls, carotenoids and specific lipids. as cofactor.

It localises to the plastid. Its subcellular location is the chloroplast thylakoid membrane. It catalyses the reaction 2 a plastoquinone + 4 hnu + 2 H2O = 2 a plastoquinol + O2. Its function is as follows. Photosystem II (PSII) is a light-driven water:plastoquinone oxidoreductase that uses light energy to abstract electrons from H(2)O, generating O(2) and a proton gradient subsequently used for ATP formation. It consists of a core antenna complex that captures photons, and an electron transfer chain that converts photonic excitation into a charge separation. The D1/D2 (PsbA/PsbD) reaction center heterodimer binds P680, the primary electron donor of PSII as well as several subsequent electron acceptors. D2 is needed for assembly of a stable PSII complex. This is Photosystem II D2 protein from Citrus sinensis (Sweet orange).